Consider the following 559-residue polypeptide: 2,3-bisphosphoglycerate-independent phosphoglycerate mutase (559 aa).

Mn(2+) contacts are provided by Asp28 and Ser81. The active-site Phosphoserine intermediate is Ser81. Substrate-binding positions include His140, 170-171, Arg206, Arg213, 286-289, and Lys361; these read RD and RADR. 5 residues coordinate Mn(2+): Asp430, His434, Asp471, His472, and His501.

It belongs to the BPG-independent phosphoglycerate mutase family. In terms of assembly, monomer. Mn(2+) is required as a cofactor. Found ubiquitously in germinating seed.

It is found in the cytoplasm. It carries out the reaction (2R)-2-phosphoglycerate = (2R)-3-phosphoglycerate. The protein operates within carbohydrate degradation; glycolysis; pyruvate from D-glyceraldehyde 3-phosphate: step 3/5. Functionally, catalyzes the interconversion of 2-phosphoglycerate and 3-phosphoglycerate. The protein is 2,3-bisphosphoglycerate-independent phosphoglycerate mutase of Nicotiana tabacum (Common tobacco).